We begin with the raw amino-acid sequence, 492 residues long: MKIDMRNISKSFGTNKVLEKIDLELQSGQIHALMGENGAGKSTLMNILTGLFPASTGTIYIDGEERTFSNPQEAEEFGISFIHQEMNTWPEMTVLENLFLGREIKTTFGLLNQKLMRQKALETFKRLGVTIPLDIPIGNLSVGQQQMIEIAKSLLNQLSILVMDEPTAALTDRETENLFRVIRGLKQEGVGVVYISHRMEEIFKITDFVTVMRDGVIVDTKETSLTNSDELVKKMVGRKLEDYYPEKHSEIGPVAFEVSNLCGDNFEDVSFYVRKGEILGFSGLMGAGRTEVMRTIFGIDKKKSGKVKIDDQEITITTPSQAIKQGIGFLTENRKDEGLILDFNIKDNMTLPSTKDFSKHGFFDEKTSTTFVQQLINRLYIKSGRPDLEVGNLSGGNQQKVVLAKWIGIAPKVLILDEPTRGVDVGAKREIYQLMNELADRGVPIVMVSSDLPEILGVSDRIMVMHEGRISGELSRKEADQEKVMQLATGGK.

ABC transporter domains lie at 3–239 (IDMR…VGRK) and 238–492 (RKLE…TGGK). 35 to 42 (GENGAGKS) is an ATP binding site.

It belongs to the ABC transporter superfamily. Ribose importer (TC 3.A.1.2.1) family. In terms of assembly, the complex is composed of an ATP-binding protein (RbsA), two transmembrane proteins (RbsC) and a solute-binding protein (RbsB).

It is found in the cell membrane. The catalysed reaction is D-ribose(out) + ATP + H2O = D-ribose(in) + ADP + phosphate + H(+). Functionally, part of the ABC transporter complex RbsABC involved in ribose import. Responsible for energy coupling to the transport system. This Streptococcus agalactiae serotype V (strain ATCC BAA-611 / 2603 V/R) protein is Ribose import ATP-binding protein RbsA.